The sequence spans 314 residues: Homoserine O-acetyltransferase (314 aa).

The Acyl-thioester intermediate role is filled by C142. Residues K163 and S192 each contribute to the substrate site. The active-site Proton acceptor is the H235. Residue E237 is part of the active site. Residue R249 participates in substrate binding.

The protein belongs to the MetA family.

Its subcellular location is the cytoplasm. It carries out the reaction L-homoserine + acetyl-CoA = O-acetyl-L-homoserine + CoA. It participates in amino-acid biosynthesis; L-methionine biosynthesis via de novo pathway; O-acetyl-L-homoserine from L-homoserine: step 1/1. In terms of biological role, transfers an acetyl group from acetyl-CoA to L-homoserine, forming acetyl-L-homoserine. This chain is Homoserine O-acetyltransferase, found in Streptococcus pneumoniae serotype 19F (strain G54).